We begin with the raw amino-acid sequence, 966 residues long: Aminopeptidase N (966 aa).

The Cytoplasmic portion of the chain corresponds to 1 to 8 (MAKGFYIS). A helical; Signal-anchor for type II membrane protein transmembrane segment spans residues 9–32 (KTLGILGILLGVAAVCTIIALSVV). Positions 33–68 (YAQEKNRNAENSATAPTLPGSTSATTATTTPAVDES) are cytosolic Ser/Thr-rich junction. The Extracellular portion of the chain corresponds to 33–966 (YAQEKNRNAE…VFKWFTENSS (934 aa)). The disordered stretch occupies residues 42–64 (ENSATAPTLPGSTSATTATTTPA). A compositionally biased stretch (low complexity) spans 44-64 (SATAPTLPGSTSATTATTTPA). The segment at 69–966 (KPWNQYRLPK…VFKWFTENSS (898 aa)) is metalloprotease. Asparagine 106, asparagine 114, and asparagine 128 each carry an N-linked (GlcNAc...) asparagine glycan. Tyrosine 176 carries the sulfotyrosine modification. N-linked (GlcNAc...) asparagine glycans are attached at residues asparagine 234, asparagine 288, asparagine 318, and asparagine 332. 351-355 (GAMEN) is a substrate binding site. Residue histidine 387 participates in Zn(2+) binding. The Proton acceptor role is filled by glutamate 388. The Zn(2+) site is built by histidine 391 and glutamate 410. Tyrosine 418 and tyrosine 423 each carry sulfotyrosine. N-linked (GlcNAc...) asparagine glycosylation is found at asparagine 573, asparagine 606, asparagine 624, and asparagine 734. Residues cysteine 760 and cysteine 767 are joined by a disulfide bond. Asparagine 784 and asparagine 817 each carry an N-linked (GlcNAc...) asparagine glycan. The cysteines at positions 797 and 833 are disulfide-linked. Phosphotyrosine is present on tyrosine 852.

The protein belongs to the peptidase M1 family. Homodimer. Interacts with SLC6A19. Zn(2+) is required as a cofactor. Post-translationally, N- and O-glycosylated. In terms of processing, sulfated. May undergo proteolysis and give rise to a soluble form. Expressed in the intestinal brush border (at protein level). Highly expressed in intestinal tract and kidney, present in liver, lymph node, spleen, and brain. Found as well in monocytes, macrophages, dendritic cells, veiled cells and B-cells but not on T-cells and thymocytes.

The protein localises to the cell membrane. The enzyme catalyses Release of an N-terminal amino acid, Xaa-|-Yaa- from a peptide, amide or arylamide. Xaa is preferably Ala, but may be most amino acids including Pro (slow action). When a terminal hydrophobic residue is followed by a prolyl residue, the two may be released as an intact Xaa-Pro dipeptide.. Its function is as follows. Broad specificity aminopeptidase which plays a role in the final digestion of peptides generated from hydrolysis of proteins by gastric and pancreatic proteases. Also involved in the processing of various peptides including peptide hormones, such as angiotensin III and IV, neuropeptides, and chemokines. May also be involved the cleavage of peptides bound to major histocompatibility complex class II molecules of antigen presenting cells. May have a role in angiogenesis and promote cholesterol crystallization. May have a role in amino acid transport by acting as binding partner of amino acid transporter SLC6A19 and regulating its activity. The chain is Aminopeptidase N (Anpep) from Mus musculus (Mouse).